Here is a 203-residue protein sequence, read N- to C-terminus: Outer-membrane lipoprotein carrier protein (203 aa).

Positions 1 to 21 (MKKMAIACALLSSVVASSVWA) are cleaved as a signal peptide. A disordered region spans residues 178–203 (QQNGAVDPSKFTFTPPQGVTIDDQRK).

This sequence belongs to the LolA family. As to quaternary structure, monomer.

Its subcellular location is the periplasm. Participates in the translocation of lipoproteins from the inner membrane to the outer membrane. Only forms a complex with a lipoprotein if the residue after the N-terminal Cys is not an aspartate (The Asp acts as a targeting signal to indicate that the lipoprotein should stay in the inner membrane). The polypeptide is Outer-membrane lipoprotein carrier protein (Salmonella paratyphi A (strain ATCC 9150 / SARB42)).